The primary structure comprises 149 residues: Nucleoside diphosphate kinase 1 (149 aa).

The ATP site is built by Lys-9, Phe-57, Arg-85, Thr-91, Arg-102, and Asn-112. His-115 functions as the Pros-phosphohistidine intermediate in the catalytic mechanism.

It belongs to the NDK family. In terms of assembly, homohexamer. Can also form dodecamers. Mg(2+) serves as cofactor.

The protein resides in the nucleus. The catalysed reaction is a 2'-deoxyribonucleoside 5'-diphosphate + ATP = a 2'-deoxyribonucleoside 5'-triphosphate + ADP. It carries out the reaction a ribonucleoside 5'-diphosphate + ATP = a ribonucleoside 5'-triphosphate + ADP. Major role in the synthesis of nucleoside triphosphates other than ATP. The ATP gamma phosphate is transferred to the NDP beta phosphate via a ping-pong mechanism, using a phosphorylated active-site intermediate. Involved in transcription regulation. Has G-quadruplex (G4) DNA-binding activity, which is independent of its nucleotide-binding and kinase activity. Binds folded G4 with low nanomolar affinity and corresponding unfolded G-rich DNA more weakly. Stabilizes folded G4s regardless of whether they are prefolded or not. In Zea mays (Maize), this protein is Nucleoside diphosphate kinase 1.